Here is a 343-residue protein sequence, read N- to C-terminus: MMTLTLAELAKITGGELHGDETVCVSRVAPMDKAGEGDVTFLSNPKYAVHLAECKATVVMLKAEQRKHCSGHVLVVDDPYVAFAKVAQALDTTPKPADGIAPSAVIASDAILGQNVSIGANAVIETGVSLGDNVVIGAGCFIGKNATIGQNTKLWANVTIYHQVQIGADCLIQAGTVIGSDGFGYANDRGEWIKIPQLGSVRIGNRVEIGACTTIDRGALDDTIIEDNVVLDNQLQIAHNVHIGYGTVMPGGTIVAGSTTIGKYCAIGGASVINGHITIADGVNITGMGMVMRSIEEKGVYSSGIPLQTNKQWRKTAARVHRIEEMNKRLKAVEKIVEQKKED.

Histidine 239 acts as the Proton acceptor in catalysis.

The protein belongs to the transferase hexapeptide repeat family. LpxD subfamily. In terms of assembly, homotrimer.

The enzyme catalyses a UDP-3-O-[(3R)-3-hydroxyacyl]-alpha-D-glucosamine + a (3R)-hydroxyacyl-[ACP] = a UDP-2-N,3-O-bis[(3R)-3-hydroxyacyl]-alpha-D-glucosamine + holo-[ACP] + H(+). Its pathway is bacterial outer membrane biogenesis; LPS lipid A biosynthesis. In terms of biological role, catalyzes the N-acylation of UDP-3-O-acylglucosamine using 3-hydroxyacyl-ACP as the acyl donor. Is involved in the biosynthesis of lipid A, a phosphorylated glycolipid that anchors the lipopolysaccharide to the outer membrane of the cell. This Vibrio vulnificus (strain YJ016) protein is UDP-3-O-acylglucosamine N-acyltransferase.